The following is a 198-amino-acid chain: Inner membrane-spanning protein YciB (198 aa).

5 consecutive transmembrane segments (helical) span residues 36–56, 67–87, 90–110, 133–153, and 162–182; these read IFSATAMLIISSVVVYGILYL, LTLVACLVFGSLTLAFHSETF, WKAPVVNWLFAVAFAGSHFIG, LNIAWIVFFLFCGAANLYVAF, and FKVFGSLGMTLIFLVGQGIYL.

Belongs to the YciB family.

The protein localises to the cell inner membrane. Its function is as follows. Plays a role in cell envelope biogenesis, maintenance of cell envelope integrity and membrane homeostasis. This chain is Inner membrane-spanning protein YciB, found in Pseudomonas savastanoi pv. phaseolicola (strain 1448A / Race 6) (Pseudomonas syringae pv. phaseolicola (strain 1448A / Race 6)).